Reading from the N-terminus, the 770-residue chain is Formate acetyltransferase (770 aa).

The region spanning 5–635 (NEMQKLAWAG…KTGNTPDGRR (631 aa)) is the PFL domain. Cys-419 functions as the S-acetylcysteine intermediate in the catalytic mechanism. The Cysteine radical intermediate role is filled by Cys-420. Positions 642-770 (PGANPMHGRD…VITRTFTESM (129 aa)) constitute a Glycine radical domain. Gly-745 carries the glycine radical modification.

The protein belongs to the glycyl radical enzyme (GRE) family. PFL subfamily. Homodimer.

It is found in the cytoplasm. It carries out the reaction formate + acetyl-CoA = pyruvate + CoA. It participates in fermentation; pyruvate fermentation; formate from pyruvate: step 1/1. Functionally, catalyzes the conversion of pyruvate to formate and acetyl-CoA. This is Formate acetyltransferase (pflB) from Haemophilus influenzae (strain ATCC 51907 / DSM 11121 / KW20 / Rd).